The following is a 74-amino-acid chain: CLAVATA3/ESR (CLE)-related protein 19 (74 aa).

The first 24 residues, 1 to 24 (MKIKGLMILASSLLILAFIHQSES), serve as a signal peptide directing secretion. N-linked (GlcNAc...) asparagine glycosylation is found at N34 and N54. A hydroxyproline mark is found at P65 and P68. P68 carries an O-linked (Ara...) hydroxyproline glycan.

Belongs to the CLV3/ESR signal peptide family. Post-translationally, the O-glycosylation (arabinosylation) of the hydroxyproline Pro-68 enhances binding affinity of the CLE19p peptide for its receptor. As to expression, mostly expressed in heart-shape embryos, pollen and young flower buds, and, to a lower extent, in inflorescence, leaves and roots.

It is found in the secreted. The protein localises to the extracellular space. Its function is as follows. Extracellular signal peptide that regulates cell fate. Represses root apical meristem maintenance. The polypeptide is CLAVATA3/ESR (CLE)-related protein 19 (Arabidopsis thaliana (Mouse-ear cress)).